We begin with the raw amino-acid sequence, 146 residues long: D-aminoacyl-tRNA deacylase (146 aa).

The short motif at 137-138 (GP) is the Gly-cisPro motif, important for rejection of L-amino acids element.

The protein belongs to the DTD family. As to quaternary structure, homodimer.

It localises to the cytoplasm. The enzyme catalyses glycyl-tRNA(Ala) + H2O = tRNA(Ala) + glycine + H(+). The catalysed reaction is a D-aminoacyl-tRNA + H2O = a tRNA + a D-alpha-amino acid + H(+). Functionally, an aminoacyl-tRNA editing enzyme that deacylates mischarged D-aminoacyl-tRNAs. Also deacylates mischarged glycyl-tRNA(Ala), protecting cells against glycine mischarging by AlaRS. Acts via tRNA-based rather than protein-based catalysis; rejects L-amino acids rather than detecting D-amino acids in the active site. By recycling D-aminoacyl-tRNA to D-amino acids and free tRNA molecules, this enzyme counteracts the toxicity associated with the formation of D-aminoacyl-tRNA entities in vivo and helps enforce protein L-homochirality. This is D-aminoacyl-tRNA deacylase from Deinococcus deserti (strain DSM 17065 / CIP 109153 / LMG 22923 / VCD115).